A 529-amino-acid polypeptide reads, in one-letter code: CTP synthase (529 aa).

Positions 1–266 are amidoligase domain; it reads MTKYIIVTGG…TKKIFNKLGL (266 aa). A CTP-binding site is contributed by serine 13. Residue serine 13 coordinates UTP. 14-19 provides a ligand contact to ATP; the sequence is SVGKGT. L-glutamine is bound at residue tyrosine 54. An ATP-binding site is contributed by aspartate 71. Mg(2+) contacts are provided by aspartate 71 and glutamate 141. CTP is bound by residues 148-150, 187-192, and lysine 223; these read DIE and KTKPLQ. UTP is bound by residues 187–192 and lysine 223; that span reads KTKPLQ. The region spanning 291 to 529 is the Glutamine amidotransferase type-1 domain; that stretch reads KIALVGKYTK…FLNFLSVASA (239 aa). Glycine 354 contributes to the L-glutamine binding site. Cysteine 381 functions as the Nucleophile; for glutamine hydrolysis in the catalytic mechanism. L-glutamine contacts are provided by residues 382–385, glutamate 405, and arginine 462; that span reads FGMQ. Active-site residues include histidine 506 and glutamate 508.

This sequence belongs to the CTP synthase family. As to quaternary structure, homotetramer.

It carries out the reaction UTP + L-glutamine + ATP + H2O = CTP + L-glutamate + ADP + phosphate + 2 H(+). The catalysed reaction is L-glutamine + H2O = L-glutamate + NH4(+). The enzyme catalyses UTP + NH4(+) + ATP = CTP + ADP + phosphate + 2 H(+). Its pathway is pyrimidine metabolism; CTP biosynthesis via de novo pathway; CTP from UDP: step 2/2. With respect to regulation, allosterically activated by GTP, when glutamine is the substrate; GTP has no effect on the reaction when ammonia is the substrate. The allosteric effector GTP functions by stabilizing the protein conformation that binds the tetrahedral intermediate(s) formed during glutamine hydrolysis. Inhibited by the product CTP, via allosteric rather than competitive inhibition. Its function is as follows. Catalyzes the ATP-dependent amination of UTP to CTP with either L-glutamine or ammonia as the source of nitrogen. Regulates intracellular CTP levels through interactions with the four ribonucleotide triphosphates. This chain is CTP synthase, found in Sulfolobus acidocaldarius (strain ATCC 33909 / DSM 639 / JCM 8929 / NBRC 15157 / NCIMB 11770).